Here is a 325-residue protein sequence, read N- to C-terminus: Lipoyl synthase (325 aa).

7 residues coordinate [4Fe-4S] cluster: C68, C73, C79, C94, C98, C101, and S308. In terms of domain architecture, Radical SAM core spans 80–297; that stretch reads FGGGTATFMI…ARVANELGFT (218 aa).

This sequence belongs to the radical SAM superfamily. Lipoyl synthase family. The cofactor is [4Fe-4S] cluster.

The protein resides in the cytoplasm. It carries out the reaction [[Fe-S] cluster scaffold protein carrying a second [4Fe-4S](2+) cluster] + N(6)-octanoyl-L-lysyl-[protein] + 2 oxidized [2Fe-2S]-[ferredoxin] + 2 S-adenosyl-L-methionine + 4 H(+) = [[Fe-S] cluster scaffold protein] + N(6)-[(R)-dihydrolipoyl]-L-lysyl-[protein] + 4 Fe(3+) + 2 hydrogen sulfide + 2 5'-deoxyadenosine + 2 L-methionine + 2 reduced [2Fe-2S]-[ferredoxin]. It participates in protein modification; protein lipoylation via endogenous pathway; protein N(6)-(lipoyl)lysine from octanoyl-[acyl-carrier-protein]: step 2/2. In terms of biological role, catalyzes the radical-mediated insertion of two sulfur atoms into the C-6 and C-8 positions of the octanoyl moiety bound to the lipoyl domains of lipoate-dependent enzymes, thereby converting the octanoylated domains into lipoylated derivatives. In Alcanivorax borkumensis (strain ATCC 700651 / DSM 11573 / NCIMB 13689 / SK2), this protein is Lipoyl synthase.